Consider the following 622-residue polypeptide: Polypeptide N-acetylgalactosaminyltransferase 6 (622 aa).

Topologically, residues 1–8 are cytoplasmic; sequence MRLLRRRH. A helical; Signal-anchor for type II membrane protein transmembrane segment spans residues 9 to 28; it reads MAVRLVMVGSAFVLFLFILQ. Residues 29 to 622 are Lumenal-facing; sequence RDVSGREQAT…SDPHQHWLFI (594 aa). A glycan (N-linked (GlcNAc...) asparagine) is linked at Asn-86. The tract at residues 103–135 is disordered; it reads WERPPQDPNGPGADGKAFQKKEWTPQETQEKEE. The span at 119 to 135 shows a compositional bias: basic and acidic residues; the sequence is AFQKKEWTPQETQEKEE. Residues 176 to 285 are catalytic subdomain A; it reads LPATSVIIVF…HGWLEPLLAR (110 aa). Mn(2+) contacts are provided by Asp-269, His-271, and His-407. The catalytic subdomain B stretch occupies residues 348-410; it reads PIKSPTFAGG…PCSVVGHVFR (63 aa). N-linked (GlcNAc...) asparagine glycosylation occurs at Asn-476. Residues 507–622 form the Ricin B-type lectin domain; it reads DHCLDVGENN…SDPHQHWLFI (116 aa). An intrachain disulfide couples Cys-509 to Cys-527. Residues Asp-511, Glu-514, His-528, and Asn-533 each contribute to the UDP-N-acetyl-alpha-D-galactosamine site. 2 cysteine pairs are disulfide-bonded: Cys-553-Cys-566 and Cys-597-Cys-610.

This sequence belongs to the glycosyltransferase 2 family. GalNAc-T subfamily. Requires Mn(2+) as cofactor.

The protein localises to the golgi apparatus membrane. The catalysed reaction is L-seryl-[protein] + UDP-N-acetyl-alpha-D-galactosamine = a 3-O-[N-acetyl-alpha-D-galactosaminyl]-L-seryl-[protein] + UDP + H(+). The enzyme catalyses L-threonyl-[protein] + UDP-N-acetyl-alpha-D-galactosamine = a 3-O-[N-acetyl-alpha-D-galactosaminyl]-L-threonyl-[protein] + UDP + H(+). Its pathway is protein modification; protein glycosylation. Catalyzes the initial reaction in O-linked oligosaccharide biosynthesis, the transfer of an N-acetyl-D-galactosamine residue to a serine or threonine residue on the protein receptor. May participate in synthesis of oncofetal fibronectin. Has activity toward MUC1A, MUC2, EA2 and fibronectin peptides. This is Polypeptide N-acetylgalactosaminyltransferase 6 (GALNT6) from Bos taurus (Bovine).